Here is a 63-residue protein sequence, read N- to C-terminus: Large ribosomal subunit protein bL28 (63 aa).

This sequence belongs to the bacterial ribosomal protein bL28 family.

The sequence is that of Large ribosomal subunit protein bL28 from Geotalea uraniireducens (strain Rf4) (Geobacter uraniireducens).